The chain runs to 572 residues: Delta-1-pyrroline-5-carboxylate dehydrogenase, mitochondrial (572 aa).

Residue 300–305 participates in NAD(+) binding; sequence GQISTR. Glutamate 320 serves as the catalytic Proton acceptor. Cysteine 354 functions as the Nucleophile in the catalytic mechanism.

It belongs to the aldehyde dehydrogenase family.

It localises to the mitochondrion matrix. The enzyme catalyses L-glutamate 5-semialdehyde + NAD(+) + H2O = L-glutamate + NADH + 2 H(+). The protein operates within amino-acid degradation; L-proline degradation into L-glutamate; L-glutamate from L-proline: step 2/2. In Emericella nidulans (strain FGSC A4 / ATCC 38163 / CBS 112.46 / NRRL 194 / M139) (Aspergillus nidulans), this protein is Delta-1-pyrroline-5-carboxylate dehydrogenase, mitochondrial (prnC).